Consider the following 615-residue polypeptide: Nuclear cap-binding protein subunit 3 (615 aa).

Lys-12 is covalently cross-linked (Glycyl lysine isopeptide (Lys-Gly) (interchain with G-Cter in SUMO2)). The segment covering 15–27 (APAGPALGLPSPE) has biased composition (low complexity). The disordered stretch occupies residues 15-43 (APAGPALGLPSPEVESGLERGEPEPMEVE). Ser-25 carries the post-translational modification Phosphoserine. Lys-70 is covalently cross-linked (Glycyl lysine isopeptide (Lys-Gly) (interchain with G-Cter in SUMO2)). At Ser-73 the chain carries Phosphoserine. The RNA recognition motif (RRM) domain stretch occupies residues 126–187 (ETIYICGVDE…MSSLPAQDKM (62 aa)). The short motif at 155-158 (WLDD) is the WLDD motif; essential for 7-methylguanosine-containing mRNA cap binding element. Disordered stretches follow at residues 182-233 (PAQD…LDTL) and 332-400 (HSGL…MDYD). Over residues 185–208 (DKMRSRDASEDKSSEKNKKDKQED) the composition is skewed to basic and acidic residues. A Glycyl lysine isopeptide (Lys-Gly) (interchain with G-Cter in SUMO2) cross-link involves residue Lys-186. 2 positions are modified to phosphoserine: Ser-209 and Ser-210. 2 stretches are compositionally biased toward acidic residues: residues 209–230 (SSDD…DVEL) and 341–360 (EPIE…DMDA). The span at 361 to 383 (DDRVVVEYHEELPGLKQPRERSL) shows a compositional bias: basic and acidic residues. Phosphothreonine is present on Thr-408. Residue Ser-410 is modified to Phosphoserine. 2 disordered regions span residues 430 to 454 (SIRN…NKLP) and 467 to 615 (EKRQ…EAES). Positions 506-516 (VRREPSSDVHS) are enriched in basic and acidic residues. Lys-536 is covalently cross-linked (Glycyl lysine isopeptide (Lys-Gly) (interchain with G-Cter in SUMO2)). 2 stretches are compositionally biased toward basic and acidic residues: residues 549–564 (KTKE…RASG) and 580–593 (IKEK…KSRL). A Phosphoserine modification is found at Ser-563. The span at 606–615 (ESSSGSEAES) shows a compositional bias: low complexity. The residue at position 615 (Ser-615) is a Phosphoserine.

The protein belongs to the NCBP3 family. Component of an alternative cap-binding complex (CBC) composed of NCBP1/CBP80 and NCBP3. Interacts with SRRT, KPNA3, THOC5 and EIF4A3.

The protein resides in the nucleus. The protein localises to the cytoplasm. In terms of biological role, associates with NCBP1/CBP80 to form an alternative cap-binding complex (CBC) which plays a key role in mRNA export. NCBP3 serves as adapter protein linking the capped RNAs (m7GpppG-capped RNA) to NCBP1/CBP80. Unlike the conventional CBC with NCBP2 which binds both small nuclear RNA (snRNA) and messenger (mRNA) and is involved in their export from the nucleus, the alternative CBC with NCBP3 does not bind snRNA and associates only with mRNA thereby playing a role in only mRNA export. The alternative CBC is particularly important in cellular stress situations such as virus infections and the NCBP3 activity is critical to inhibit virus growth. The sequence is that of Nuclear cap-binding protein subunit 3 from Mus musculus (Mouse).